The primary structure comprises 406 residues: Endoglucanase 1 (406 aa).

The first 43 residues, 1-43 (MNSKKIGAMIAAAVLSLIVMTPAATRKIVQRQTRNSSTAVENS), serve as a signal peptide directing secretion. 2 stretches are compositionally biased toward polar residues: residues 30–41 (QRQTRNSSTAVE) and 51–62 (ENVPVSQTHTND). Positions 30-62 (QRQTRNSSTAVENSAADESETENVPVSQTHTND) are disordered. The active-site Proton donor is the Glu210. Glu330 serves as the catalytic Nucleophile.

This sequence belongs to the glycosyl hydrolase 5 (cellulase A) family.

The enzyme catalyses Endohydrolysis of (1-&gt;4)-beta-D-glucosidic linkages in cellulose, lichenin and cereal beta-D-glucans.. This chain is Endoglucanase 1 (Eg I), found in Ruminococcus albus.